A 423-amino-acid chain; its full sequence is Gamma-glutamyl phosphate reductase (423 aa).

It belongs to the gamma-glutamyl phosphate reductase family.

The protein localises to the cytoplasm. It carries out the reaction L-glutamate 5-semialdehyde + phosphate + NADP(+) = L-glutamyl 5-phosphate + NADPH + H(+). The protein operates within amino-acid biosynthesis; L-proline biosynthesis; L-glutamate 5-semialdehyde from L-glutamate: step 2/2. Functionally, catalyzes the NADPH-dependent reduction of L-glutamate 5-phosphate into L-glutamate 5-semialdehyde and phosphate. The product spontaneously undergoes cyclization to form 1-pyrroline-5-carboxylate. This chain is Gamma-glutamyl phosphate reductase, found in Burkholderia ambifaria (strain ATCC BAA-244 / DSM 16087 / CCUG 44356 / LMG 19182 / AMMD) (Burkholderia cepacia (strain AMMD)).